Consider the following 284-residue polypeptide: D-tagatose-1,6-bisphosphate aldolase subunit GatY (284 aa).

Asp82 functions as the Proton donor in the catalytic mechanism. Residues His83 and His180 each contribute to the Zn(2+) site. Gly181 contributes to the dihydroxyacetone phosphate binding site. His208 serves as a coordination point for Zn(2+). Dihydroxyacetone phosphate contacts are provided by residues 209 to 211 (GAS) and 230 to 233 (NVAT).

Belongs to the class II fructose-bisphosphate aldolase family. TagBP aldolase GatY subfamily. Forms a complex with GatZ. Zn(2+) serves as cofactor.

It catalyses the reaction D-tagatofuranose 1,6-bisphosphate = D-glyceraldehyde 3-phosphate + dihydroxyacetone phosphate. It functions in the pathway carbohydrate metabolism; D-tagatose 6-phosphate degradation; D-glyceraldehyde 3-phosphate and glycerone phosphate from D-tagatose 6-phosphate: step 2/2. Its function is as follows. Catalytic subunit of the tagatose-1,6-bisphosphate aldolase GatYZ, which catalyzes the reversible aldol condensation of dihydroxyacetone phosphate (DHAP or glycerone-phosphate) with glyceraldehyde 3-phosphate (G3P) to produce tagatose 1,6-bisphosphate (TBP). Requires GatZ subunit for full activity and stability. Is involved in the catabolism of galactitol. The sequence is that of D-tagatose-1,6-bisphosphate aldolase subunit GatY from Shigella boydii serotype 4 (strain Sb227).